Reading from the N-terminus, the 518-residue chain is Protein translocase subunit SecD (518 aa).

6 helical membrane-spanning segments follow: residues 9–29 (IFLS…NFMQ), 361–381 (LIGF…LGLF), 384–404 (IALS…QATL), 406–426 (LPGI…NVLI), 452–474 (FATI…IFGV), and 486–506 (IGII…IDIW).

Belongs to the SecD/SecF family. SecD subfamily. As to quaternary structure, forms a complex with SecF. Part of the essential Sec protein translocation apparatus which comprises SecA, SecYEG and auxiliary proteins SecDF-YajC and YidC.

The protein resides in the cell inner membrane. Part of the Sec protein translocase complex. Interacts with the SecYEG preprotein conducting channel. SecDF uses the proton motive force (PMF) to complete protein translocation after the ATP-dependent function of SecA. This is Protein translocase subunit SecD from Rickettsia felis (strain ATCC VR-1525 / URRWXCal2) (Rickettsia azadi).